A 230-amino-acid polypeptide reads, in one-letter code: Ribose-5-phosphate isomerase A (230 aa).

Substrate-binding positions include 32–35, 85–88, and 98–101; these read TGST, DGAD, and KGGG. Glu107 serves as the catalytic Proton acceptor. Substrate is bound at residue Lys125.

This sequence belongs to the ribose 5-phosphate isomerase family. Homodimer.

The enzyme catalyses aldehydo-D-ribose 5-phosphate = D-ribulose 5-phosphate. It functions in the pathway carbohydrate degradation; pentose phosphate pathway; D-ribose 5-phosphate from D-ribulose 5-phosphate (non-oxidative stage): step 1/1. Catalyzes the reversible conversion of ribose-5-phosphate to ribulose 5-phosphate. The sequence is that of Ribose-5-phosphate isomerase A from Burkholderia ambifaria (strain ATCC BAA-244 / DSM 16087 / CCUG 44356 / LMG 19182 / AMMD) (Burkholderia cepacia (strain AMMD)).